A 485-amino-acid polypeptide reads, in one-letter code: Rhamnulokinase (485 aa).

12–16 (ATSGR) contributes to the ATP binding site. Substrate contacts are provided by residues glycine 80 and 238–240 (HDT). The Proton acceptor role is filled by aspartate 239. Threonine 261 is a binding site for ATP. Substrate is bound at residue asparagine 298. Glutamate 306 serves as a coordination point for ATP. A disulfide bond links cysteine 355 and cysteine 372. Glycine 404 contributes to the ATP binding site.

This sequence belongs to the rhamnulokinase family. Mg(2+) serves as cofactor.

It catalyses the reaction L-rhamnulose + ATP = L-rhamnulose 1-phosphate + ADP + H(+). Its pathway is carbohydrate degradation; L-rhamnose degradation; glycerone phosphate from L-rhamnose: step 2/3. Its function is as follows. Involved in the catabolism of L-rhamnose (6-deoxy-L-mannose). Catalyzes the transfer of the gamma-phosphate group from ATP to the 1-hydroxyl group of L-rhamnulose to yield L-rhamnulose 1-phosphate. The polypeptide is Rhamnulokinase (Bacteroides thetaiotaomicron (strain ATCC 29148 / DSM 2079 / JCM 5827 / CCUG 10774 / NCTC 10582 / VPI-5482 / E50)).